The primary structure comprises 107 residues: Small ribosomal subunit protein uS17 (107 aa).

This sequence belongs to the universal ribosomal protein uS17 family. As to quaternary structure, part of the 30S ribosomal subunit.

Its function is as follows. One of the primary rRNA binding proteins, it binds specifically to the 5'-end of 16S ribosomal RNA. This Aquifex aeolicus (strain VF5) protein is Small ribosomal subunit protein uS17.